A 575-amino-acid chain; its full sequence is CCR4-NOT transcription complex subunit 4 (575 aa).

The segment at 14 to 57 (CPLCMEPLEIDDINFFPCTCGYQICRFCWHRIRTDENGLCPACR) adopts an RING-type; degenerate zinc-finger fold. A coiled-coil region spans residues 68 to 104 (KPLSQEELQRIKNEKKQKQNERKQKISENRKHLASVR). Residue serine 71 is modified to Phosphoserine. The RRM domain occupies 109-189 (NLVFVVGLSQ…VVDGRTLKAS (81 aa)). A C3H1-type zinc finger spans residues 190–217 (LGTTKYCSYFLKNMQCPKPDCMYLHELG). Disordered stretches follow at residues 256-372 (TGSV…EPQS) and 424-458 (SVQD…HPAA). The span at 281–299 (DSLSIGNGDNSQQISNSDT) shows a compositional bias: polar residues. Serine 301 is modified (phosphoserine). Positions 307 to 322 (SKSNPVIPISSSNHSA) are enriched in polar residues. Residue serine 324 is modified to Phosphoserine. Residues 345-356 (NPIPSGLPPFPS) are compositionally biased toward pro residues. Over residues 428 to 441 (QPSLSPTSLQNSSS) the composition is skewed to low complexity. Serine 432 carries the phosphoserine modification. An asymmetric dimethylarginine mark is found at arginine 475 and arginine 483. Residue serine 490 is modified to Phosphoserine. Arginine 497 bears the Asymmetric dimethylarginine mark. A disordered region spans residues 553 to 575 (PLSTSSHSLQQGQQPTSLHTTVA).

In terms of assembly, interacts with CNOT1 via its C-terminus but does not stably associate with the CCR4-NOT complex. Interacts (via RING domain) with UBE2D2. Interacts with ABCE1, PINK1 and PELO. Post-translationally, autoubiquitinated.

It is found in the cytoplasm. It localises to the nucleus. The catalysed reaction is S-ubiquitinyl-[E2 ubiquitin-conjugating enzyme]-L-cysteine + [acceptor protein]-L-lysine = [E2 ubiquitin-conjugating enzyme]-L-cysteine + N(6)-ubiquitinyl-[acceptor protein]-L-lysine.. It functions in the pathway protein modification; protein ubiquitination. Its function is as follows. Has E3 ubiquitin ligase activity, promoting ubiquitination and degradation of target proteins. Involved in activation of the JAK/STAT pathway. Catalyzes ubiquitination of methylated RBM15. Plays a role in quality control of translation of mitochondrial outer membrane-localized mRNA. As part of the PINK1-regulated signaling, upon mitochondria damage, ubiquitinates ABCE1 and thereby recruits autophagy receptors to the mitochondrial outer membrane to initiate mitophagy. The sequence is that of CCR4-NOT transcription complex subunit 4 (CNOT4) from Homo sapiens (Human).